A 329-amino-acid chain; its full sequence is GMP reductase (329 aa).

Catalysis depends on cysteine 178, which acts as the Thioimidate intermediate. Valine 207–valine 230 contacts NADP(+).

The protein belongs to the IMPDH/GMPR family. GuaC type 2 subfamily.

It catalyses the reaction IMP + NH4(+) + NADP(+) = GMP + NADPH + 2 H(+). Its function is as follows. Catalyzes the irreversible NADPH-dependent deamination of GMP to IMP. It functions in the conversion of nucleobase, nucleoside and nucleotide derivatives of G to A nucleotides, and in maintaining the intracellular balance of A and G nucleotides. The chain is GMP reductase from Lactococcus lactis subsp. lactis (strain IL1403) (Streptococcus lactis).